We begin with the raw amino-acid sequence, 330 residues long: Pseudouridine-5'-phosphate glycosidase (330 aa).

Glu50 (proton donor) is an active-site residue. Substrate is bound by residues Lys112 and Val132. Asp164 contributes to the Mn(2+) binding site. 166 to 168 contacts substrate; sequence SSD. The active-site Nucleophile is Lys185.

This sequence belongs to the pseudouridine-5'-phosphate glycosidase family. In terms of assembly, homotrimer. It depends on Mn(2+) as a cofactor.

The protein resides in the peroxisome. The catalysed reaction is D-ribose 5-phosphate + uracil = psi-UMP + H2O. In terms of biological role, catalyzes the reversible cleavage of pseudouridine 5'-phosphate (PsiMP) to ribose 5-phosphate and uracil. Functions biologically in the cleavage direction, as part of a pseudouridine degradation pathway. Acts together with the pseudouridine kinase PUKI in the peroxisome to prevent toxic pseudouridine monophosphate accumulation. Can catalyze the formation of pseudouridine 5'-phosphate (reverse reaction) in vitro, with a catalytic efficiency 4 times lower than the hydrolysis reaction. This chain is Pseudouridine-5'-phosphate glycosidase, found in Arabidopsis thaliana (Mouse-ear cress).